Here is a 161-residue protein sequence, read N- to C-terminus: Lipoprotein signal peptidase (161 aa).

Helical transmembrane passes span 64-84 and 92-114; these read YRVP…AWFY and VLGR…DRVR. Active-site residues include D120 and D138. A helical membrane pass occupies residues 131–151; sequence WPAFNVADSAICVGVGMLLLA.

The protein belongs to the peptidase A8 family.

It localises to the cell inner membrane. It carries out the reaction Release of signal peptides from bacterial membrane prolipoproteins. Hydrolyzes -Xaa-Yaa-Zaa-|-(S,diacylglyceryl)Cys-, in which Xaa is hydrophobic (preferably Leu), and Yaa (Ala or Ser) and Zaa (Gly or Ala) have small, neutral side chains.. It participates in protein modification; lipoprotein biosynthesis (signal peptide cleavage). In terms of biological role, this protein specifically catalyzes the removal of signal peptides from prolipoproteins. The polypeptide is Lipoprotein signal peptidase (Syntrophotalea carbinolica (strain DSM 2380 / NBRC 103641 / GraBd1) (Pelobacter carbinolicus)).